A 263-amino-acid polypeptide reads, in one-letter code: Probable cyclic nucleotide phosphodiesterase CPS_4178 (263 aa).

Fe cation contacts are provided by Asp-21, His-23, Asp-62, Asn-94, His-160, His-198, and His-200. AMP-binding positions include His-23, Asp-62, and 94–95 (NH). His-200 is a binding site for AMP.

Belongs to the cyclic nucleotide phosphodiesterase class-III family. The cofactor is Fe(2+).

This chain is Probable cyclic nucleotide phosphodiesterase CPS_4178, found in Colwellia psychrerythraea (strain 34H / ATCC BAA-681) (Vibrio psychroerythus).